The chain runs to 331 residues: 6-phosphogluconolactonase (331 aa).

The protein belongs to the cycloisomerase 2 family.

It catalyses the reaction 6-phospho-D-glucono-1,5-lactone + H2O = 6-phospho-D-gluconate + H(+). It functions in the pathway carbohydrate degradation; pentose phosphate pathway; D-ribulose 5-phosphate from D-glucose 6-phosphate (oxidative stage): step 2/3. Functionally, catalyzes the hydrolysis of 6-phosphogluconolactone to 6-phosphogluconate. This Klebsiella pneumoniae (strain 342) protein is 6-phosphogluconolactonase.